A 309-amino-acid polypeptide reads, in one-letter code: Succinoglycan biosynthesis protein ExoM (309 aa).

Belongs to the glycosyltransferase 2 family.

It localises to the cell inner membrane. It functions in the pathway glycan metabolism; exopolysaccharide biosynthesis. Its function is as follows. Glycosyltransferase required for the synthesis of succinoglycan (EPS I). Needed for the addition of the fourth sugar (glucose), catalyzes the formation of a beta-1,4 linkage between the third acetylated sugar and the fourth sugar. The chain is Succinoglycan biosynthesis protein ExoM (exoM) from Rhizobium meliloti (strain 1021) (Ensifer meliloti).